A 1550-amino-acid chain; its full sequence is Adhesion G protein-coupled receptor L3 (1550 aa).

An N-terminal signal peptide occupies residues 1 to 19 (MCPPQLFILMMLLAPVVHG). At 20-948 (GKHNERHPAL…VHDLLLDVIT (929 aa)) the chain is on the extracellular side. The interval 34–80 (RHAEHSPGGPLPPRHLLQQPAAERSTAHRGQGPRGTARGVRGPGAPG) is disordered. The SUEL-type lectin domain maps to 103–192 (SCESYPIELR…KYLEVQYECV (90 aa)). Disulfide bonds link C104/C134, C113/C191, C146/C178, C159/C165, and C203/C385. Residue N161 is glycosylated (N-linked (GlcNAc...) asparagine). Positions 202–461 (LCPGLLKGVY…VVKYSLDFGP (260 aa)) constitute an Olfactomedin-like domain. The tract at residues 317-347 (YHDTSPYRWGGKSDIDLAVDENGLWVIYATE) is interaction with FLRT3. Ca(2+) contacts are provided by D332, N380, A381, and V435. Positions 518–538 (NLGRSTTPSLPGRRNRSTSTP) are disordered. Residues N532, N616, N839, N884, and N910 are each glycosylated (N-linked (GlcNAc...) asparagine). A GAIN-B domain is found at 755-934 (DIVRENTDNI…AVLMAHVEVK (180 aa)). 2 disulfides stabilise this stretch: C885–C916 and C904–C918. The interval 885–934 (CSFWSYSKRTMTGYWSTQGCRLLTTNKTHTTCSCNHLTNFAVLMAHVEVK) is GPS. A stachel region spans residues 922-938 (TNFAVLMAHVEVKHSDA). Residues 949 to 969 (WVGILLSLVCLLICIFTFCFF) form a helical membrane-spanning segment. Over 970 to 977 (RGLQSDRN) the chain is Cytoplasmic. A helical transmembrane segment spans residues 978-998 (TIHKNLCISLFVAELLFLIGI). N999 is a glycosylation site (N-linked (GlcNAc...) asparagine). Residues 999-1006 (NRTDQPIA) lie on the Extracellular side of the membrane. The helical transmembrane segment at 1007 to 1027 (CAVFAALLHFFFLAAFTWMFL) threads the bilayer. The Cytoplasmic portion of the chain corresponds to 1028–1048 (EGVQLYIMLVEVFESEHSRRK). The helical transmembrane segment at 1049–1069 (YFYLVGYGMPALIVAVSAAVD) threads the bilayer. The Extracellular portion of the chain corresponds to 1070-1087 (YRSYGTDKVCWLRLDTYF). A helical transmembrane segment spans residues 1088-1108 (IWSFIGPATLIIMLNVIFLGI). The Cytoplasmic segment spans residues 1109–1141 (ALYKMFHHTAILKPESGCLDNINYEDNRPFIKS). Residues 1142–1162 (WVIGAIALLCLLGLTWAFGLM) form a helical membrane-spanning segment. Over 1163-1168 (YINEST) the chain is Extracellular. N1165 is a glycosylation site (N-linked (GlcNAc...) asparagine). Residues 1169 to 1189 (VIMAYLFTIFNSLQGMFIFIF) traverse the membrane as a helical segment. The Cytoplasmic segment spans residues 1190–1550 (HCVLQKKVRK…KGPAHLVTSL (361 aa)). The tract at residues 1213–1236 (KSTESSIGSGKTSGSRTPGRYSTG) is disordered. Position 1253 is a phosphoserine (S1253). 2 disordered regions span residues 1410 to 1435 (LLPP…PQDH) and 1528 to 1550 (PPNK…VTSL). A Phosphoserine modification is found at S1535. The PDZ-binding signature appears at 1545–1550 (HLVTSL).

It belongs to the G-protein coupled receptor 2 family. LN-TM7 subfamily. As to quaternary structure, heterodimer of 2 chains generated by proteolytic processing; the large extracellular N-terminal fragment and the membrane-bound C-terminal fragment predominantly remain associated and non-covalently linked. Interacts (via olfactomedin-like domain) with FLRT1 (via extracellular domain). Interacts (via olfactomedin-like domain) with FLRT2 (via extracellular domain). Interacts (via olfactomedin-like domain) with FLRT3 (via extracellular domain); the interaction is direct. Interacts (via extracellular domain) with TENM1. Interacts (via extracellular domain) with TENM2. Interacts (via extracellular domain) with TENM3. Identified in a complex with FLRT3 and UNC5B; does not interact with UNC5B by itself. Identified in a complex with FLRT3 and UNC5D; does not interact with UNC5D by itself. Interacts (via PDZ-binding motif) with SHANK3. Interacts (via PDZ-binding motif) with DLG4. Autoproteolytically processed at the GPS region of the GAIN-B domain; this cleavage modulates receptor activity. In terms of tissue distribution, predominantly expressed in brain, followed by heart, placenta, pancreas, kidney and testis.

The protein localises to the cell membrane. The protein resides in the postsynaptic cell membrane. It localises to the cell projection. Its subcellular location is the axon. It is found in the cell junction. With respect to regulation, forms a heterodimer of 2 chains generated by proteolytic processing that remain associated through non-covalent interactions mediated by the GAIN-B domain. In the inactivated receptor, the Stachel sequence (also named stalk) is embedded in the GAIN-B domain, where it adopts a beta-strand conformation. On activation, the Stachel moves into the 7 transmembrane region and adopts a twisted hook-shaped configuration that forms contacts within the receptor, leading to coupling of a G-alpha protein, which activates signaling. The cleaved GAIN-B and N-terminal domains can then dissociate from the rest of the receptor. Its function is as follows. Orphan adhesion G-protein coupled receptor (aGPCR), which mediates synapse specificity. Ligand binding causes a conformation change that triggers signaling via guanine nucleotide-binding proteins (G proteins) and modulates the activity of downstream effectors. ADGRL3 is coupled with different classes of G alpha proteins, such as G(12)/G(13), G(s), G(i) or G(q), depending on the context. Coupling to G(12)/G(13) G proteins, which mediates the activation Rho small GTPases is the most efficient. Following G-protein coupled receptor activation, associates with cell adhesion molecules that are expressed at the surface of adjacent cells to direct synapse specificity. Specifically mediates the establishment of Schaffer-collateral synapses formed by CA3-region axons on CA1-region pyramidal neurons in the hippocampus. Localizes to postsynaptic spines in excitatory synapses in the S.oriens and S.radiatum and interacts with presynaptic cell adhesion molecules FLRT3 and TENM2, promoting synapse formation. Plays a role in the development of glutamatergic synapses in the cortex. Important in determining the connectivity rates between the principal neurons in the cortex. Orphan adhesion G-protein coupled receptor (aGPCR), which mediates synapse specificity. Ligand binding causes a conformation change that triggers signaling via guanine nucleotide-binding proteins (G proteins) and modulates the activity of downstream effectors, such as adenylate cyclase. Isoform 1 is specifically coupled to G(s) G proteins and mediates activation of adenylate cyclase activity. Following G-protein coupled receptor activation, undergoes liquid-liquid phase transition, associates with (1) cell adhesion molecules that are expressed at the surface of adjacent cells, as well as (2) PDZ-containing proteins, such as SHANK3 and DLG4, in the cytoplasm to direct synapse formation. The chain is Adhesion G protein-coupled receptor L3 from Rattus norvegicus (Rat).